Here is a 366-residue protein sequence, read N- to C-terminus: Terpene cyclase atmA (366 aa).

8 consecutive transmembrane segments (helical) span residues F9–F29, L84–I104, G113–I133, G162–A182, I195–F215, V233–V253, A291–W311, and I333–I353.

The protein belongs to the membrane-bound ascI terpene cyclase family.

It localises to the membrane. In terms of biological role, aflatrem synthesis protein A; part of the ATM2 gene cluster that mediates the biosynthesis of aflatrem, a tremorgenic mycotoxin with acute neurotoxic effects. Synthesis of geranylgeranyl diphosphate (GGPP) by AtmG (a GGPP synthase) precedes condensation of GGPP with indole 3-glycerol phosphate, followed by epoxidation and cyclization by AtmM (a FAD-dependent monooxygenase) and AtmC (a prenyltransferase) to produce paspaline. AtmB is also essential for paspaline production, but its exact role has not been identified yet. AtmP, a cytochrome P450 monooxygenase, subsequently converts paspaline to 13-desoxypaxilline via PC-M6 by removal of the C-30 methyl group and oxidation at C-10. AtmQ, a cytochrome P450 monooxygenase, then catalyzes the oxidation of 13-desoxypaxilline, first at C-7 to produce paspalicine and then at C-13 to form paspalinine. Finally, AtmD prenylates paspalinine to form aflatrem. The role of atmA in the aflatrem biosynthesis is still unknown. The chain is Terpene cyclase atmA from Aspergillus flavus.